The sequence spans 327 residues: L-lactate dehydrogenase (327 aa).

NAD(+) contacts are provided by residues Val-18, Asp-39, Lys-44, Tyr-69, and 83–84 (GA). Residues Gln-86, Arg-92, and 124–127 (NPVD) each bind substrate. NAD(+) is bound by residues 122 to 124 (AAN) and Ser-147. 152 to 155 (DSAR) is a binding site for substrate. Residues Arg-157 and His-172 each coordinate beta-D-fructose 1,6-bisphosphate. Residue His-179 is the Proton acceptor of the active site. A Phosphotyrosine modification is found at Tyr-224. Thr-233 is a binding site for substrate.

This sequence belongs to the LDH/MDH superfamily. LDH family. Homotetramer.

The protein localises to the cytoplasm. The enzyme catalyses (S)-lactate + NAD(+) = pyruvate + NADH + H(+). The protein operates within fermentation; pyruvate fermentation to lactate; (S)-lactate from pyruvate: step 1/1. Allosterically activated by fructose 1,6-bisphosphate (FBP). In terms of biological role, catalyzes the conversion of lactate to pyruvate. The chain is L-lactate dehydrogenase from Streptococcus pyogenes serotype M3 (strain SSI-1).